The sequence spans 155 residues: Ribosome maturation factor RimP (155 aa).

The protein belongs to the RimP family.

It localises to the cytoplasm. Its function is as follows. Required for maturation of 30S ribosomal subunits. This chain is Ribosome maturation factor RimP, found in Bacteroides fragilis (strain ATCC 25285 / DSM 2151 / CCUG 4856 / JCM 11019 / LMG 10263 / NCTC 9343 / Onslow / VPI 2553 / EN-2).